We begin with the raw amino-acid sequence, 293 residues long: Autophagy-related protein 36 (293 aa).

2 stretches are compositionally biased toward polar residues: residues I98 to P108 and G260 to S273. Disordered stretches follow at residues I98–S121 and S250–S273.

As to quaternary structure, interacts with PEX3, ATG8 and ATG11.

Its subcellular location is the peroxisome. Functionally, required for autophagic breakdown of peroxisomes, called pexophagy, through linking peroxisomes to the autophagy apparatus. Involved in regulation of the glyoxylate cycle. In Saccharomyces cerevisiae (strain ATCC 204508 / S288c) (Baker's yeast), this protein is Autophagy-related protein 36 (ATG36).